The sequence spans 545 residues: MSRFIFVTGGVVSSLGKGITSASLATLLEARGLNVTLIKMDPYINVDPGTMSPYQHGEVFVTEDGAETDLDLGHYERFIRTRLNRRNSFTTGRVYQHVLDKERRGEYLGATVQVIPHITDEIKLKIREGAGDADVAIVEIGGTAGDIESLPFLEAARQMRVELGSSQSLLVHLTLVPYIATAGEIKTKPTQHSVKELRSIGLQPDILVCRADDPIPQSAREKIALFTNVEARAVISSPDCKTIYQVPRGMHEQGLDAIVVEKFGLDLPEPDLGEWDRVVEAQLNPEHEVTVGMVGKYIELVDAYKSLNEALIHAGISNRAKVNILYLDAEDIERDGTGVLESLDAILVPGGFGDRGTEGKIAAIRYARENKVPYLGICLGMQLAVIEYARHVAGIEKAHSSELNPNTPDPVVGLITEWITEDGQKELRSADSDLGGTMRLGGQECVLEADSRAAECYGSTHIVERHRHRYEVNNNYLPQLEAAGLKIVGRSADGELVEVIEVGDHPWFVACQFHPEFTSTPRDGHGLFKGYVAAALAEQKAHKET.

The tract at residues Met-1–Leu-265 is amidoligase domain. Residue Ser-13 coordinates CTP. Ser-13 serves as a coordination point for UTP. Position 14 to 19 (Ser-14 to Ile-19) interacts with ATP. Residue Tyr-54 coordinates L-glutamine. Asp-71 serves as a coordination point for ATP. 2 residues coordinate Mg(2+): Asp-71 and Glu-139. Residues Asp-146–Glu-148, Lys-186–Gln-191, and Lys-222 contribute to the CTP site. UTP contacts are provided by residues Lys-186–Gln-191 and Lys-222. Positions Thr-290–Ala-541 constitute a Glutamine amidotransferase type-1 domain. Position 351 (Gly-351) interacts with L-glutamine. The active-site Nucleophile; for glutamine hydrolysis is the Cys-378. L-glutamine is bound by residues Leu-379–Gln-382, Glu-402, and Arg-469. Residues His-514 and Glu-516 contribute to the active site.

This sequence belongs to the CTP synthase family. Homotetramer.

The enzyme catalyses UTP + L-glutamine + ATP + H2O = CTP + L-glutamate + ADP + phosphate + 2 H(+). It carries out the reaction L-glutamine + H2O = L-glutamate + NH4(+). The catalysed reaction is UTP + NH4(+) + ATP = CTP + ADP + phosphate + 2 H(+). The protein operates within pyrimidine metabolism; CTP biosynthesis via de novo pathway; CTP from UDP: step 2/2. With respect to regulation, allosterically activated by GTP, when glutamine is the substrate; GTP has no effect on the reaction when ammonia is the substrate. The allosteric effector GTP functions by stabilizing the protein conformation that binds the tetrahedral intermediate(s) formed during glutamine hydrolysis. Inhibited by the product CTP, via allosteric rather than competitive inhibition. Catalyzes the ATP-dependent amination of UTP to CTP with either L-glutamine or ammonia as the source of nitrogen. Regulates intracellular CTP levels through interactions with the four ribonucleotide triphosphates. In Alcanivorax borkumensis (strain ATCC 700651 / DSM 11573 / NCIMB 13689 / SK2), this protein is CTP synthase.